The chain runs to 582 residues: DNA mismatch repair protein MutL (582 aa).

This sequence belongs to the DNA mismatch repair MutL/HexB family.

In terms of biological role, this protein is involved in the repair of mismatches in DNA. It is required for dam-dependent methyl-directed DNA mismatch repair. May act as a 'molecular matchmaker', a protein that promotes the formation of a stable complex between two or more DNA-binding proteins in an ATP-dependent manner without itself being part of a final effector complex. This chain is DNA mismatch repair protein MutL, found in Chlamydia abortus (strain DSM 27085 / S26/3) (Chlamydophila abortus).